A 312-amino-acid chain; its full sequence is 4-diphosphocytidyl-2-C-methyl-D-erythritol kinase (312 aa).

Residue lysine 16 is part of the active site. 101 to 111 (PIGAGLAGGSS) is an ATP binding site. Aspartate 143 is an active-site residue.

Belongs to the GHMP kinase family. IspE subfamily.

The enzyme catalyses 4-CDP-2-C-methyl-D-erythritol + ATP = 4-CDP-2-C-methyl-D-erythritol 2-phosphate + ADP + H(+). It participates in isoprenoid biosynthesis; isopentenyl diphosphate biosynthesis via DXP pathway; isopentenyl diphosphate from 1-deoxy-D-xylulose 5-phosphate: step 3/6. Its function is as follows. Catalyzes the phosphorylation of the position 2 hydroxy group of 4-diphosphocytidyl-2C-methyl-D-erythritol. The sequence is that of 4-diphosphocytidyl-2-C-methyl-D-erythritol kinase from Prochlorococcus marinus (strain MIT 9515).